The sequence spans 175 residues: Shikimate kinase (175 aa).

Gly14 to Thr19 contacts ATP. Mg(2+) is bound at residue Ser18. Residues Asp36, Arg60, and Gly82 each coordinate substrate. Arg120 is an ATP binding site. Arg140 is a substrate binding site. Residue Gln157 coordinates ATP.

This sequence belongs to the shikimate kinase family. In terms of assembly, monomer. The cofactor is Mg(2+).

It localises to the cytoplasm. It catalyses the reaction shikimate + ATP = 3-phosphoshikimate + ADP + H(+). It participates in metabolic intermediate biosynthesis; chorismate biosynthesis; chorismate from D-erythrose 4-phosphate and phosphoenolpyruvate: step 5/7. Functionally, catalyzes the specific phosphorylation of the 3-hydroxyl group of shikimic acid using ATP as a cosubstrate. This chain is Shikimate kinase, found in Actinobacillus succinogenes (strain ATCC 55618 / DSM 22257 / CCUG 43843 / 130Z).